The primary structure comprises 961 residues: MGDSESVNQDHGRNTFLSRVFGLQPDDITTSIRTGDMSRYPLNAYSGGSEMFSGSPTSSRIDDDDDDDEGRVPESDQQSSSGDNSDDIKANDDVIEDVELTDGNGDNYTNSKMINTNYSIFGSLRKVGQQSSDEEDDGSLSNEEEDIDEEDEIDEIDADEPLFVNSTSQRKQKRKSSVNFKNGSEMSSLLFQRILNKKDSKSNGEASNKMFTSSNQGNHNYKYRNGHDLEGGVHFNKKEGRRNSLFGSHEAGGHKSHNSAPSKGPNLLKNISILNNTPSNKVYTLSPKERALWKWANVENLDVFLQEVYKYYLGSGFSCIVLRKLLNLTTLIFVVYISTYLGYCIDYSKLPTSSRLSDIIIDQCYTTRITGITKGLLWVFYVFVGLKVVQFYFDLQNLTDMHNFYNYLLGISDNELQTIPWQNIIQQLMYLKDQNALTANVVEVKAKNKIDPLVVANRIMRKDNYLIALYNENILDLSLPIPFYKESILTKTLEWNINLCIIGFAFNESGFIKQSFLKKSQHQFITEELRKRFMLAGFLNIILSPFLVTYFVLLYFLRYFNEFKTSPGTIGARQYTPMAEWTFREFNELYHIFQKRLGLSTVIADKYINQFPKESTDLILKFISFISGSFVAVLMSLTLLDSENFLNFEVTKDRSVLFYITVFGAIWSVCRNSISDEYKVYDPDETIKELSEFTHYLPKEWEGKHHTEDVKQEFCKLYNIRLIILLRELASLVLTPFILWFSLPACSDRIVDFFSDSSTYIDGLGYVCKYATFGINQANAQKVKGGKRHQDMKMNTNNFSNEVINESDEDVLDSDSDSEIDSNDKMMRSYMYFMEDYENSENAIGKNQLPRKKYKDPSLTNPSLNTDYSWRKQFQPGQRPELFRIGKHALQVPTNVRNLGKKSTLNSENPYDNSSNLGESFINPTIMPDRDLGRNGVNGGKKEAGMLRMVKDYYKTSDIGR.

4 disordered regions span residues 1–91, 126–180, 198–225, and 244–265; these read MGDS…IKAN, KVGQ…SVNF, KDSK…KYRN, and SLFG…SKGP. Over 1 to 324 the chain is Cytoplasmic; sequence MGDSESVNQD…SGFSCIVLRK (324 aa). Over residues 132-160 the composition is skewed to acidic residues; that stretch reads SDEEDDGSLSNEEEDIDEEDEIDEIDADE. A compositionally biased stretch (polar residues) spans 203–219; it reads NGEASNKMFTSSNQGNH. The chain crosses the membrane as a helical span at residues 325–345; the sequence is LLNLTTLIFVVYISTYLGYCI. Over 346–374 the chain is Lumenal; sequence DYSKLPTSSRLSDIIIDQCYTTRITGITK. The chain crosses the membrane as a helical span at residues 375–395; the sequence is GLLWVFYVFVGLKVVQFYFDL. Residues 396–536 lie on the Cytoplasmic side of the membrane; the sequence is QNLTDMHNFY…EELRKRFMLA (141 aa). The stretch at 537–557 is an intramembrane region; sequence GFLNIILSPFLVTYFVLLYFL. Topologically, residues 558–617 are cytoplasmic; the sequence is RYFNEFKTSPGTIGARQYTPMAEWTFREFNELYHIFQKRLGLSTVIADKYINQFPKESTD. The helical transmembrane segment at 618–638 threads the bilayer; sequence LILKFISFISGSFVAVLMSLT. The Lumenal portion of the chain corresponds to 639–654; that stretch reads LLDSENFLNFEVTKDR. The chain crosses the membrane as a helical span at residues 655 to 675; sequence SVLFYITVFGAIWSVCRNSIS. Topologically, residues 676–721 are cytoplasmic; that stretch reads DEYKVYDPDETIKELSEFTHYLPKEWEGKHHTEDVKQEFCKLYNIR. Residues 722–742 lie within the membrane without spanning it; that stretch reads LIILLRELASLVLTPFILWFS. Residues 743 to 961 lie on the Cytoplasmic side of the membrane; that stretch reads LPACSDRIVD…DYYKTSDIGR (219 aa). The span at 900-918 shows a compositional bias: polar residues; it reads GKKSTLNSENPYDNSSNLG. The segment at 900-940 is disordered; that stretch reads GKKSTLNSENPYDNSSNLGESFINPTIMPDRDLGRNGVNGG.

It belongs to the ATG9 family. As to quaternary structure, homotrimer; forms a homotrimer with a central pore that forms a path between the two membrane leaflets. Phosphorylated by ATG1. ATG1 phosphorylation is required for preautophagosome elongation.

The protein resides in the preautophagosomal structure membrane. Its subcellular location is the cytoplasmic vesicle membrane. It is found in the golgi apparatus membrane. The protein localises to the endoplasmic reticulum membrane. The catalysed reaction is a 1,2-diacyl-sn-glycero-3-phosphocholine(in) = a 1,2-diacyl-sn-glycero-3-phosphocholine(out). The enzyme catalyses a 1,2-diacyl-sn-glycero-3-phospho-L-serine(in) = a 1,2-diacyl-sn-glycero-3-phospho-L-serine(out). It carries out the reaction a 1,2-diacyl-sn-glycero-3-phosphoethanolamine(in) = a 1,2-diacyl-sn-glycero-3-phosphoethanolamine(out). It catalyses the reaction a 1,2-diacyl-sn-glycero-3-phospho-(1D-myo-inositol-3-phosphate)(in) = a 1,2-diacyl-sn-glycero-3-phospho-(1D-myo-inositol-3-phosphate)(out). Phospholipid scramblase involved in autophagy and cytoplasm to vacuole transport (Cvt) vesicle formation. Cycles between the preautophagosomal structure/phagophore assembly site (PAS) and the cytoplasmic vesicle pool and supplies membrane for the growing autophagosome. Lipid scramblase activity plays a key role in preautophagosomal structure/phagophore assembly by distributing the phospholipids that arrive through ATG2 from the cytoplasmic to the luminal leaflet of the bilayer, thereby driving autophagosomal membrane expansion. Required for mitophagy. Also involved in endoplasmic reticulum-specific autophagic process and is essential for the survival of cells subjected to severe ER stress. Different machineries are required for anterograde trafficking to the PAS during either the Cvt pathway or bulk autophagy and for retrograde trafficking. The sequence is that of Autophagy-related protein 9 (ATG9) from Vanderwaltozyma polyspora (strain ATCC 22028 / DSM 70294 / BCRC 21397 / CBS 2163 / NBRC 10782 / NRRL Y-8283 / UCD 57-17) (Kluyveromyces polysporus).